A 144-amino-acid chain; its full sequence is Grifin (144 aa).

The 129-residue stretch at 5–133 folds into the Galectin domain; it reads SKAFCAGGLA…DHCLAQVELA (129 aa). Ser138 carries the post-translational modification Phosphoserine.

As to quaternary structure, homodimer. As to expression, not detected in lens.

This is Grifin (GRIFIN) from Homo sapiens (Human).